The primary structure comprises 227 residues: Adapter protein MecA 1 (227 aa).

The protein belongs to the MecA family. In terms of assembly, homodimer.

Its function is as follows. Enables the recognition and targeting of unfolded and aggregated proteins to the ClpC protease or to other proteins involved in proteolysis. Acts negatively in the development of competence by binding ComK and recruiting it to the ClpCP protease. When overexpressed, inhibits sporulation. Also involved in Spx degradation by ClpC. In Bacillus anthracis, this protein is Adapter protein MecA 1 (mecA1).